Here is a 445-residue protein sequence, read N- to C-terminus: Phosphoglucosamine mutase (445 aa).

The active-site Phosphoserine intermediate is the serine 104. The Mg(2+) site is built by serine 104, aspartate 243, aspartate 245, and aspartate 247. Serine 104 bears the Phosphoserine mark.

Belongs to the phosphohexose mutase family. It depends on Mg(2+) as a cofactor. In terms of processing, activated by phosphorylation.

It catalyses the reaction alpha-D-glucosamine 1-phosphate = D-glucosamine 6-phosphate. In terms of biological role, catalyzes the conversion of glucosamine-6-phosphate to glucosamine-1-phosphate. The sequence is that of Phosphoglucosamine mutase from Chromobacterium violaceum (strain ATCC 12472 / DSM 30191 / JCM 1249 / CCUG 213 / NBRC 12614 / NCIMB 9131 / NCTC 9757 / MK).